The chain runs to 936 residues: UPF0746 protein DDB_G0280787 (936 aa).

The segment covering 1 to 19 (MISNKRKEIDTIDGHHEKD) has biased composition (basic and acidic residues). Positions 1–30 (MISNKRKEIDTIDGHHEKDNDDDDSDGIDN) are disordered. Residues 44–78 (SGSTNYRELQIIAKSLGLASNGKKQLVYNRIEGYF) form the SAP domain. Residues 91-110 (ETNQQEEKKEEEQQQPQPQE) form a disordered region.

Belongs to the UPF0746 family.

The sequence is that of UPF0746 protein DDB_G0280787 from Dictyostelium discoideum (Social amoeba).